We begin with the raw amino-acid sequence, 122 residues long: Large ribosomal subunit protein uL14 (122 aa).

It belongs to the universal ribosomal protein uL14 family. As to quaternary structure, part of the 50S ribosomal subunit. Forms a cluster with proteins L3 and L19. In the 70S ribosome, L14 and L19 interact and together make contacts with the 16S rRNA in bridges B5 and B8.

Functionally, binds to 23S rRNA. Forms part of two intersubunit bridges in the 70S ribosome. The chain is Large ribosomal subunit protein uL14 from Streptococcus uberis (strain ATCC BAA-854 / 0140J).